Reading from the N-terminus, the 993-residue chain is Desmoglein-3 (993 aa).

Residues 1–23 (MTCLFPRALGSLALLMVVLLVQG) form the signal peptide. A propeptide spanning residues 24–49 (ELHVKPGGQHREDGTALQLAKRRYKR) is cleaved from the precursor. Cadherin domains follow at residues 50–157 (EWVK…PPIF), 158–267 (SQTI…FPVL), 268–388 (RESQ…PPSK), and 384–495 (RPPS…CPSV). Residues 50–617 (EWVKFAKPCR…YGESSWRLGP (568 aa)) are Extracellular-facing. Asn-110 and Asn-180 each carry an N-linked (GlcNAc...) asparagine glycan. 2 N-linked (GlcNAc...) asparagine glycosylation sites follow: Asn-459 and Asn-546. The chain crosses the membrane as a helical span at residues 618–638 (AAIGLILLGLLMLLLAPLLLL). Residues 639 to 993 (TCDCGSGPIG…LYTKETCSHL (355 aa)) are Cytoplasmic-facing. The interval 641–714 (DCGSGPIGGA…NTYAGGTMVE (74 aa)) is required for interaction with CTNND1 and localization at cell-cell junctions. The disordered stretch occupies residues 845-876 (AKQAKPGPKDSGSGADTCARSMEVPQSGSNRY). 2 Desmoglein repeat repeats span residues 905 to 930 (MSTS…LLTE) and 931 to 961 (TYST…ERVI).

Homodimer. Part of a complex that contains DSG3, PKP1, YAP1 and YWHAG; the complex is required for localization of DSG3 and YAP1 to the cell membrane in keratinocytes. Interacts with PKP2. Interacts with CTNND1; the interaction facilitates DSG3 localization and retention at cell-cell junctions. Interacts with CDH1; the interaction is required for CDH1 localization to developing adherens junctions. Interacts with RAC1; the interaction is required for DSG3 translocation to cell-cell junctions, organization of cortical F-actin bundles and actin anchoring at cell-cell junctions. Interacts with DSC3; the interaction may limit the interaction of DSC3 with p38MAPK family members and therefore repress p38MAPK signaling activation. As to expression, expressed in the basal layer of the outer root sheath of the telogen hair club, specifically at the cell membrane between the apex of the cells and the surrounding hair club (at protein level). Expression is less abundant between the lateral margins of the outer root sheath basal cells (at protein level). Expressed in epidermis. Expressed in the epithelium of the tongue.

The protein resides in the cell membrane. It is found in the cell junction. It localises to the desmosome. Its subcellular location is the cytoplasm. The protein localises to the tight junction. Its function is as follows. A component of desmosome cell-cell junctions which are required for positive regulation of cellular adhesion. Required for adherens and desmosome junction assembly in response to mechanical force in keratinocytes. Required for desmosome-mediated cell-cell adhesion of cells surrounding the telogen hair club and the basal layer of the outer root sheath epithelium, consequently is essential for the anchoring of telogen hairs in the hair follicle. Required for the maintenance of the epithelial barrier via promoting desmosome-mediated intercellular attachment of suprabasal epithelium to basal cells. May play a role in the protein stability of the desmosome plaque components DSP, JUP, PKP1, PKP2 and PKP3. Required for YAP1 localization at the plasma membrane in keratinocytes in response to mechanical strain, via the formation of an interaction complex composed of DSG3, PKP1 and YWHAG. May also be involved in the positive regulation of YAP1 target gene transcription and as a result cell proliferation. Positively regulates cellular contractility and cell junction formation via organization of cortical F-actin bundles and anchoring of actin to tight junctions, in conjunction with RAC1. The cytoplasmic pool of DSG3 is required for the localization of CDH1 and CTNNB1 at developing adherens junctions, potentially via modulation of SRC activity. Inhibits keratinocyte migration via suppression of p38MAPK signaling, may therefore play a role in moderating wound healing. The polypeptide is Desmoglein-3 (Dsg3) (Mus musculus (Mouse)).